Reading from the N-terminus, the 398-residue chain is Leucine carboxyl methyltransferase 1 (398 aa).

A compositionally biased stretch (polar residues) spans 1-11 (MSASQIPNLNT). The tract at residues 1–54 (MSASQIPNLNTLRRGGGRGRLRGRGGFETGAPSEDRHGSRGLAAQDRVVQGTDN) is disordered. Residues R97, G123, D151, and 201–202 (DL) contribute to the S-adenosyl-L-methionine site. Residues 208 to 218 (SGSATTSRSPS) are compositionally biased toward low complexity. The segment at 208–232 (SGSATTSRSPSSPNPAEKDQPPCPL) is disordered. E246 serves as a coordination point for S-adenosyl-L-methionine.

Belongs to the methyltransferase superfamily. LCMT family.

The catalysed reaction is [phosphatase 2A protein]-C-terminal L-leucine + S-adenosyl-L-methionine = [phosphatase 2A protein]-C-terminal L-leucine methyl ester + S-adenosyl-L-homocysteine. In terms of biological role, methylates the carboxyl group of the C-terminal leucine residue of protein phosphatase 2A catalytic subunits to form alpha-leucine ester residues. The sequence is that of Leucine carboxyl methyltransferase 1 (ppm1) from Aspergillus fumigatus (strain ATCC MYA-4609 / CBS 101355 / FGSC A1100 / Af293) (Neosartorya fumigata).